A 265-amino-acid chain; its full sequence is Transcriptional activator AggR (265 aa).

One can recognise an HTH araC/xylS-type domain in the interval 164–261 (DKVRNTIEKD…GITPKQFLTY (98 aa)). DNA-binding regions (H-T-H motif) lie at residues 181 to 202 (AIIADEFNVSEITIRKRLESEY) and 228 to 251 (ISQISNMIGFSSTSYFIRLFVKHF).

Homodimer.

In terms of biological role, transcriptional activator of aggregative adherence fimbria I expression in enteroaggregative E.coli. The sequence is that of Transcriptional activator AggR (aggR) from Escherichia coli.